The sequence spans 1036 residues: uncharacterized protein (1036 aa).

The next 2 helical transmembrane spans lie at 4–24 (YLFI…NASL) and 1004–1024 (ILWV…VLFL).

It belongs to the MG414/MG415 family.

The protein localises to the cell membrane. This is an uncharacterized protein from Mycoplasma genitalium (strain ATCC 33530 / DSM 19775 / NCTC 10195 / G37) (Mycoplasmoides genitalium).